The chain runs to 648 residues: Exoribonuclease 2 (648 aa).

Positions 191–518 (RIDLTYLDFI…INHRLIKSII (328 aa)) constitute an RNB domain. The 83-residue stretch at 565–647 (KKKYQANIID…GNKKIIATMI (83 aa)) folds into the S1 motif domain.

Belongs to the RNR ribonuclease family. RNase II subfamily.

It localises to the cytoplasm. The catalysed reaction is Exonucleolytic cleavage in the 3'- to 5'-direction to yield nucleoside 5'-phosphates.. Involved in mRNA degradation. Hydrolyzes single-stranded polyribonucleotides processively in the 3' to 5' direction. The polypeptide is Exoribonuclease 2 (Buchnera aphidicola subsp. Cinara cedri (strain Cc)).